Consider the following 1012-residue polypeptide: DNA polymerase catalytic subunit (1012 aa).

It belongs to the DNA polymerase type-B family.

The protein localises to the host nucleus. The enzyme catalyses DNA(n) + a 2'-deoxyribonucleoside 5'-triphosphate = DNA(n+1) + diphosphate. The protein is DNA polymerase catalytic subunit (U38) of Human herpesvirus 6A (strain Uganda-1102) (HHV-6 variant A).